The primary structure comprises 94 residues: Large ribosomal subunit protein uL23 (94 aa).

Belongs to the universal ribosomal protein uL23 family. In terms of assembly, part of the 50S ribosomal subunit. Contacts protein L29, and trigger factor when it is bound to the ribosome.

Its function is as follows. One of the early assembly proteins it binds 23S rRNA. One of the proteins that surrounds the polypeptide exit tunnel on the outside of the ribosome. Forms the main docking site for trigger factor binding to the ribosome. This Listeria monocytogenes serotype 4b (strain CLIP80459) protein is Large ribosomal subunit protein uL23.